The sequence spans 262 residues: Nickel import ATP-binding protein NikD (262 aa).

In terms of domain architecture, ABC transporter spans 6 to 249 (LAIEGLTATT…PGHEVTRMLV (244 aa)). 42-49 (GASGSGKS) is an ATP binding site.

The protein belongs to the ABC transporter superfamily. Nickel importer (TC 3.A.1.5.3) family. The complex is composed of two ATP-binding proteins (NikD and NikE), two transmembrane proteins (NikB and NikC) and a solute-binding protein (NikA).

The protein localises to the cell inner membrane. The catalysed reaction is Ni(2+)(out) + ATP + H2O = Ni(2+)(in) + ADP + phosphate + H(+). Its function is as follows. Part of the ABC transporter complex NikABCDE involved in nickel import. Responsible for energy coupling to the transport system. This is Nickel import ATP-binding protein NikD from Brucella suis biovar 1 (strain 1330).